We begin with the raw amino-acid sequence, 282 residues long: MLYFSDNELDDFLLEDIYRGDLTTHALGLESIPAEICFKRKNAGIVAGISIAEKLLRKLDIHPQVYVKEGEFVEAGSLLLSAKGSADKLHQAWKVVQLVLEWSCGVAQYTAEMISNAKAINPAAVVACTRKSIPNTRKLATNAVLAAGGHIHRQGLSETLLVFTNHRNLLSDPEDWQGIVTRLKQQAPENKITLEADNLVQFEQMLTADPDIIQLDKFTLEQVKQALHLLALANKNITLSVAGGVNKHNVAEYAKLGIQLFITSAPYYAAPEDIKVIIEKQV.

Belongs to the NadC/ModD family.

The polypeptide is Putative pyrophosphorylase ModD (modD) (Pasteurella multocida (strain Pm70)).